A 678-amino-acid chain; its full sequence is Endopolyphosphatase (678 aa).

At 1–2 (MR) the chain is on the cytoplasmic side. Residues 3 to 23 (SPLLASLFALALSIASSEAAI) form a helical; Signal-anchor for type II membrane protein membrane-spanning segment. Residues 24-678 (SSTEQVPLSG…ELMLVSTETD (655 aa)) are Vacuolar-facing. A disordered region spans residues 70 to 109 (YKTGSTFDSGCHRKPKKDGKSEGKKATENERGNEDLDDKE). Residues 87 to 103 (DGKSEGKKATENERGNE) are compositionally biased toward basic and acidic residues. N138, N369, and N447 each carry an N-linked (GlcNAc...) asparagine glycan. The segment at 504-547 (KGSGGHRHDVPKGDCSLPSNEDKPHCTFKRKPRHYSKRSPSRTN) is disordered. The segment covering 529–543 (CTFKRKPRHYSKRSP) has biased composition (basic residues). N591 and N616 each carry an N-linked (GlcNAc...) asparagine glycan.

Belongs to the endopolyphosphatase PPN1 family. Requires a divalent metal cation as cofactor. Post-translationally, processing by proteases in the vacuole may be required for activation.

It is found in the vacuole membrane. The enzyme catalyses [phosphate](n+1) + n H2O = (n+1) phosphate + n H(+). Catalyzes the hydrolysis of inorganic polyphosphate (polyP) chains of many hundreds of phosphate residues into shorter lengths. This Cryptococcus neoformans var. neoformans serotype D (strain JEC21 / ATCC MYA-565) (Filobasidiella neoformans) protein is Endopolyphosphatase (PPN1).